A 452-amino-acid polypeptide reads, in one-letter code: MARRYFGTDGIRGKVGEGPITPEFVLRLGYAAGKVLAGADRWAKTGTRPTVLIGKDTRVSGYMLEAALEAGFSAAGVDVMLAGPMPTPGIAYLTRALRLAAGVVISASHNPYYDNGIKFFSADGNKLPDEVEAQIEEQLDQPLACAASEQLGKARRLDDAAGRYIEFCKSTFPAAFDLRGLKLVVDCAHGAAYDVAPHVFHELGADVIPIGVAPNGFNINDGVGATAPDALVRAVRANHADLGIALDGDADRLQVVDAAGRLYNGDELLYILVKDRIATEGKVEGAVGTLMTNMAVEVALQEAGVKFVRAAVGDRYVLEQLREHGWQLGAEGSGHILSLDRHSTGDGIVSALLVLAAMKRSDKTLAELLGGVTLFPQKLINVRMKPDADWKGSDVIRRAIAKAEDALNGRGRVLIRASGTEPVLRVMVEAENVADAVQYAESIASAVKQATA.

The active-site Phosphoserine intermediate is the serine 108. Residues serine 108, aspartate 247, aspartate 249, and aspartate 251 each contribute to the Mg(2+) site. Serine 108 carries the post-translational modification Phosphoserine.

The protein belongs to the phosphohexose mutase family. Requires Mg(2+) as cofactor. In terms of processing, activated by phosphorylation.

The enzyme catalyses alpha-D-glucosamine 1-phosphate = D-glucosamine 6-phosphate. Catalyzes the conversion of glucosamine-6-phosphate to glucosamine-1-phosphate. In Paraburkholderia xenovorans (strain LB400), this protein is Phosphoglucosamine mutase.